Here is a 3797-residue protein sequence, read N- to C-terminus: MEDEERQRKLAAGKAKLARFRQRKAQYDGDIPKKQKKKRTSSSKHDSSLHTDQQSGELCSESSQRVDLAGNPDCSGPERKHGQVFSAEPESEISTTADECSSEINGCNSVMKPRKPTDPLREEEFSLDDSSSEQGAQSSQTCLQMVEKELAEKQHDIEELTQELEEMRASFGTEGLKQLQEFEAAIKQRDGIITQLTANLQQARREKDDTMVEFLELTEQSQKLQIQFQHLQANETLQNSTLSRTATDLLQAKRQIFTQQQQLQDYQKKEEDLQAQISFLQEKLRAFEMEKDRKIENLNAKEIQEKQALIDELNTRVVEEEKKTVELKNKVTTADELLGGLHEQLTQRNQEIQSLKLELGNSQQNERKCSEEIKELMRTVEELQKRNLKDSWLETSAVRRVEQETQRKLSHLQAELDEMYGKQIVQMKQELINQHMSQIEELKSQHKREMENTLKSDTNAAISKEQVNLMNAAINELNVRLQETHAQKEELKGELGVVLGEKSALQSQSNDLLEEVRFLREQVQKARQTIAEQENRLSEARKSLSTVEDLKAEIVAASESRKELELKHEAEITNYKIKLEMLEKEKNAVLDRMAESQEAELERLRTQPLFSHEEELSKLKEDLEVEHRINIEKLKDNLGIHYKQQIDGLQNEMNRKMESMQCETDNLITQQNQLILENSKLRDLQECLVNSKSEEMNLQINELQKEIEILKQEEKEKGTLEQEVQELQLKTEQLEKQLKEKEDDLQEKCAQLDAENNILKEEKRVLEDKLKMYSPSEQEERSIAVDPSTSKLADSRWQKEVAMLRKETEDLQQQCLYLNEEIEKQRNTFAFAEKNFEVNYQELQREYTCLLKIRDDLEATQTKQALEYESKLRALEEELLSKRGNPXAPKGKSSGIFPSETLEIGEVVEKDTTELMEKLEVTKREKLELSEKVSGLSEQLKQTHCTINSLSAEXRALKQEKEQLLLRCGELELLANPSGTENAAVCPVQMSSYQAGLVMGKVGDSGGSISKISKDLAEESKPMIEDKIPFKESGREQLLLPTRAQEPSHATVEPCESEKLQQELHALKAEQDDLRLQMEAQRICLFVVYSTHADQVRAHMEKEREEALCSLKDELISAQQKKIDELHKMHQCQLQNVKIQETGDEPLQVLIERLQKAVSEKCFHISKTLNNVFDECYTPLKCEMNIEEKENSGVYTSQNQSPELQEYRYEVQDFQESMQVLLGKVTEECRKLSGLQTRLGKIHEQQTDGVALEFAEQNAAEEEAGLLSGCSQSALQSTDVSLESKVSSLPASEKNRECERQVQELQSPVAAGQLQLTETEASHRAEIECLQQRLEAASEAPVQPSLSIDSVVFKGSGAQKPVYCGSCLREYVDGTAKFSDRFEVRQETNMVNLMEKQYQERLEEEIAKVIVSMSIAFAQQTELSRLSEGKENTIQSEQAHTLCSQNKHQLNDITSQSQVGLQTFEATDKBFKEEFKPLSKELGEYRKAVPLSSHDDLDDILKSEEHGLAISEEIFSKDETFIVRKSMHDEVLVSSMDTSRQLILNEQLEDMRQELVRQYEEHQQATEMLRQAHMQQMERQREDQEQLQEEIKRLNEQLTQKSSIDTEHVVSERERVLLEELEALKQLPLAGRKELCCELRHSSTQTQDGHDDQEVEEQTLKDKTLERSPEDALLDRNLSNERYALKKANNRLLKILLEVVKTTSAAEETIGRHVLGILDRSSKGQTASSLLWRSEADASATTCAPEDCARAMDESIPSYPGTAIATHDSIWSKVTEEGAELSQRLVRSGFAGPVIDPENEELMLNISSRLQAAVEKLLEAISETNTQLEHAKVTQTELMRESFRQKQEATESLHCLEELRERLQEESRAREQLAEELNKAESVIDGYSDEKTLFERQIQEKTDIIEHLEQEVLCMNNRLQELESDQRRVEEERQLLCRQREAMRAEAGPVEQQFLQETEKLMKEKLEVQCQAEKVRGDLQKQVKALEIDVEEQVSRFIELEQEKNAELTDLRQQSQALEKQLEKMRKFLDEQAIDREHERDVFQQEIQKLEHQLKAAPRIQPVSEHQAREVEQLTNHLKEKTDRCSELLLSKEQLQRDIQERNEEIEKLECRVRELEQALLASAEPFPKVEDQKRSGAVAADPELSLEVQLQAERDATDRKQKEITNLEEQLEQFREELENKNDEVQELLMQLEIQRKESTTRLQELQQENRLFKDEIEKLGFAMKESDSVSTRDQPMLFGKFAQLIQEKEIEIDRLNEQFIKLQQQLKLTTDNKVIEEQKEQIQDLETQIERLMSEREHEKKQREEEVEQLTGVVEKLQQEVVSTEQQREGARTLPEDEESFKHQLDKVTAEKLVLEQQVETTNQVMTHMNNVLKEINFKMDQITQSLCNLNKECASNEELPSLPKESVHMTVHELGSDNLQPEDAPAQDVTKPLEKQTSLTRLQESPEASRTQEIESLASSVGAKDVELTQCREQTETIQEQAQSETDRLQKKLTDLQRSLEKFAAALVSQVQMEAAQEYVPFHQEKQPVSSAPGSTDIQNANGLTGASTESLIPTVTLRLAEVESRVAEVHSGTMSEKLVGIVGGNASETEKRVIELQKLLEEAEERPEEGGEQSSRDGEVRESYMTSLQKDLGQVKDPLTEAKEKLSYSLEKEKRTGEQESREAPIPEPPSVEVGGCSGLTERTDKVSSSGNQTLQILLRDAAIQTDLQSESSQEEVRDTINQLTKKMEHIQELHAAEILDMESRHILETESLKKEHYVAIQLLTKECETLKEMTQCLRCKEGSSIPELADSVAYQSREVYSSDSESDWGQSQGFDTAIEGREEGETSADLFPKKIKGLVKAVHSEGMQVLSLSSPLCDDGEDRSIQQLSESWLKERQAYLNTISSLKDLISKMQVRRETEVYDRCHLSDWRGELLLACQRVFIKERSVLLATFQTELTSLSTRDVDGLLNSLEQRIQEQGIEYHTAMDCLQKADRRSLLAEIEDLRAQINGGKMTLEREQGTEKSSQELLDCSMQQKQSLEMQLELSSLRDRAAELQEQLSSEKMVVAELKSELAQAKLELGTTLKAQHKRLKELEAFRSEVKEKTDEIHFLSDTLAREQKNSLELQWALEKEKARSGHHEEREKEELEDLKFSLEDQKRRNTQLNLLLEQQKQLLNESQQKIESQKMLHDAQLSEEQGRNLGLQALLESEQVRIQEMKSTLDKERELYAQLQSREDGGQPPPALPSEDLLKELQKQLEEKHSRIVELLSETEKYKLDSLQTRQQMEKDRQVHQKTLQTEQEANTQGQKKMQELQSKVEELQRQLQEKRQQVYKLDLEGKRLQGLMQEFQKQELEPEEKPGSRGLVDQNLNEPATWNFTDDRTRNWVLQQKMGEAKDRNFTKLIEINGGELDHNHDLEMIRQTLQHVASKLQHVAQKACSRLQFETAGDDAFIWIQENIDGIILQLQKLTGQPGDEHSLGPPSSSCGSLTESLMRQNTELTRLINQLTEEKNTLRSIVIKLEELNRCYWHTGASRDCCSRFSFIDPADIEAIIASEKEVWNREKLSLQKALKRAEAKVYKLKAELRNDALLRNLGPDTDHAALQKIYNKYLRASSFRKALIYQKKYLLLLLGGFQECEDVTLGVLARMGGHLALKDSKTITNHPKAFSRFRSAVRVSIAISRMKFLVRRWQQVTSTSSININRDGFGLSPGIEKTDPFYHSPGGLELYGEPRHTMYRSRFDLDYPRSLLPLQNRYPGTPGDLNSISMASSQLHQYNPDKSLTDYVTRLEALRRRLGAIQSGSTTQFHFGMRR.

Positions 1-140 (MEDEERQRKL…SSEQGAQSSQ (140 aa)) are disordered. Polar residues-rich tracts occupy residues 50–65 (HTDQ…SSQR) and 92–108 (EIST…NGCN). Residues 115–124 (KPTDPLREEE) show a composition bias toward basic and acidic residues. S139 is modified (phosphoserine). 2 coiled-coil regions span residues 140-607 (QTCL…LRTQ) and 640-976 (IHYK…LLAN). S1288 carries the phosphoserine modification. Disordered stretches follow at residues 1643 to 1668 (STQT…LERS), 2323 to 2343 (VVST…EESF), and 2419 to 2454 (SDNL…ASRT). Composition is skewed to basic and acidic residues over residues 1648-1668 (DGHD…LERS) and 2328-2343 (QQRE…EESF). Residues 1808 to 2377 (SRLQAAVEKL…MTHMNNVLKE (570 aa)) are a coiled coil. Over residues 2438-2454 (KQTSLTRLQESPEASRT) the composition is skewed to polar residues. The tract at residues 2498–2510 (DLQRSLEKFAAAL) is PKA-RII subunit binding domain. 2 disordered regions span residues 2604–2695 (LEEA…SSSG) and 3271–3296 (MEKD…QKKM). Residues 2606–2615 (EAEERPEEGG) show a composition bias toward acidic residues. A compositionally biased stretch (basic and acidic residues) spans 2642–2669 (PLTEAKEKLSYSLEKEKRTGEQESREAP). Positions 2975–3325 (LQKADRRSLL…QVYKLDLEGK (351 aa)) form a coiled coil. The segment covering 3279-3294 (QKTLQTEQEANTQGQK) has biased composition (polar residues). Residues S3732, S3755, and S3787 each carry the phosphoserine modification.

As to quaternary structure, interacts with the regulatory region of protein kinase N (PKN), protein phosphatase 2A (PP2A), protein phosphatase 1 (PP1) and the immature non-phosphorylated form of PKC epsilon. Interacts with CIP4 and FNBP1. Interacts with chloride intracellular channel proteins CLIC1, CLIC4 and CLIC5. CSNK1D binding promotes its centrosomal subcellular location. Interacts with GM130/GOLGA2; leading to recruitment to the Golgi apparatus. Interacts with KCNQ1; targets protein kinase A (PKA) catalytic and regulatory subunits and protein phosphatase 1 (PP1), to the heterodimer KCNQ1-KCNE1. Interacts with PDE4DIP isoform 2; this interaction stabilizes both proteins. In complex with PDE4DIP isoform 2, recruits CAMSAP2 to the Golgi apparatus. Forms a pericentrosomal complex with CDK5RAP2, EB1/MAPRE1 and PDE4DIP isoform 2; within this complex, MAPRE1 binding to CDK5RAP2 may be mediated by PDE4DIP. Interacts with MAPRE1 and MAPRE3. Interacts (via C-terminus) with CAMSAP2; this interaction is much stronger in the presence of PDE4DIP isoform 2. Interacts with CAMSAP3. Interacts (via C-terminus) with the gamma-tubulin ring complex (gamma-TuRC), composed of gamma-tubulin, TUBGCP2, TUBGCP3, TUBGCP4, TUBGCP5 and TUBGCP6.

The protein resides in the golgi apparatus. The protein localises to the cytoplasm. It localises to the cytoskeleton. Its subcellular location is the microtubule organizing center. It is found in the centrosome. Its function is as follows. Scaffolding protein that assembles several protein kinases and phosphatases on the centrosome and Golgi apparatus. Required to maintain the integrity of the Golgi apparatus. Required for microtubule nucleation at the cis-side of the Golgi apparatus. Required for association of the centrosomes with the poles of the bipolar mitotic spindle during metaphase. In complex with PDE4DIP isoform 2/MMG8/SMYLE, recruits CAMSAP2 to the Golgi apparatus and tethers non-centrosomal minus-end microtubules to the Golgi, an important step for polarized cell movement. In complex with PDE4DIP isoform 2, EB1/MAPRE1 and CDK5RAP2, contributes to microtubules nucleation and extension also from the centrosome to the cell periphery. This Mus musculus (Mouse) protein is A-kinase anchor protein 9 (Akap9).